The primary structure comprises 473 residues: DNA (cytosine-5)-methyltransferase DRM1A (473 aa).

The UBA 1 domain occupies 20–61; the sequence is SAPSALVAYFLGMGFSREMVFRAIKEIGDTDSEQILELLLTY. Residues 84–101 are compositionally biased toward acidic residues; it reads EEEDEEEDVNWDEDDTVD. Positions 84–115 are disordered; sequence EEEDEEEDVNWDEDDTVDNFDRATYSDGSGDE. One can recognise a UBA 2 domain in the interval 120–140; that stretch reads EMSEKDEKIKSLVSMGFPEDE. Positions 204–431 constitute an SAM-dependent MTase DRM-type domain; it reads VHRNLPDQAL…DSVKTIMASI (228 aa).

Belongs to the class I-like SAM-binding methyltransferase superfamily. DRM-methyltransferase family.

The protein localises to the nucleus. It catalyses the reaction a 2'-deoxycytidine in DNA + S-adenosyl-L-methionine = a 5-methyl-2'-deoxycytidine in DNA + S-adenosyl-L-homocysteine + H(+). Functionally, involved in de novo DNA methylation. Involved in RNA-directed DNA methylation (RdDM). The protein is DNA (cytosine-5)-methyltransferase DRM1A of Oryza sativa subsp. japonica (Rice).